A 629-amino-acid polypeptide reads, in one-letter code: ATP-dependent RNA helicase DBP6 (629 aa).

Residues 1 to 129 are disordered; it reads MFASRFDPSQ…GIEDEAASTH (129 aa). Over residues 72 to 84 the composition is skewed to acidic residues; sequence ASEEDSSEVEEEE. Phosphoserine is present on residues serine 73, serine 77, and serine 78. The segment covering 88–103 has biased composition (polar residues); that stretch reads STHSTVLSRFKQTVSL. The span at 116 to 125 shows a compositional bias: acidic residues; sequence KEDEGIEDEA. Residues 197 to 205 carry the Q motif motif; sequence TFPIQSIIL. A Helicase ATP-binding domain is found at 221-401; the sequence is RNFTRRIGDI…GLNLYKPKLF (181 aa). 234–241 serves as a coordination point for ATP; that stretch reads AATGSGKT. The DEAD box motif lies at 341–344; it reads DEAD. The region spanning 437-603 is the Helicase C-terminal domain; it reads SICQFMAHSP…SVQPLELDFT (167 aa).

It belongs to the DEAD box helicase family. DDX51/DBP6 subfamily. As to quaternary structure, associated with pre-ribosomal particles. Interacts with DBP9 and RSA3. Together with NOP8, URB1, URB2 and RSA3, forms an RNA-independent complex, which is required during early maturation of nascent 60S ribosomal subunits.

Its subcellular location is the nucleus. The protein resides in the nucleolus. The catalysed reaction is ATP + H2O = ADP + phosphate + H(+). ATP-binding RNA helicase involved in the biogenesis of 60S ribosomal subunits and is required for the normal formation of 25S and 5.8S rRNAs. The chain is ATP-dependent RNA helicase DBP6 (DBP6) from Saccharomyces cerevisiae (strain ATCC 204508 / S288c) (Baker's yeast).